Reading from the N-terminus, the 138-residue chain is Transcription antitermination protein NusB (138 aa).

This sequence belongs to the NusB family.

Functionally, involved in transcription antitermination. Required for transcription of ribosomal RNA (rRNA) genes. Binds specifically to the boxA antiterminator sequence of the ribosomal RNA (rrn) operons. This chain is Transcription antitermination protein NusB, found in Photorhabdus laumondii subsp. laumondii (strain DSM 15139 / CIP 105565 / TT01) (Photorhabdus luminescens subsp. laumondii).